A 155-amino-acid chain; its full sequence is MKMSDNKQALQVAALKNGTVIDHIPSDKLFTVVALLGLQDSDSNITIGNNFESKKLGKKGIIKVADRFFTDEEISRLSVVAPNVKLNIIRDYEVVEKKQVLMPEELRGIVKCANPKCITNNEPMTTLFHVIDKEHGILKCHYCEKEQSKEGIKLL.

Residues cysteine 112, cysteine 117, cysteine 140, and cysteine 143 each contribute to the Zn(2+) site.

The protein belongs to the PyrI family. In terms of assembly, contains catalytic and regulatory chains. Zn(2+) serves as cofactor.

Its function is as follows. Involved in allosteric regulation of aspartate carbamoyltransferase. The protein is Aspartate carbamoyltransferase regulatory chain of Phocaeicola vulgatus (strain ATCC 8482 / DSM 1447 / JCM 5826 / CCUG 4940 / NBRC 14291 / NCTC 11154) (Bacteroides vulgatus).